Reading from the N-terminus, the 158-residue chain is Hypoxanthine DNA glycosylase (158 aa).

The active site involves N39.

It belongs to the uracil-DNA glycosylase (UDG) superfamily. Type 6 (HDG) family.

In terms of biological role, excises hypoxanthine, a deamination product of adenine, from double-stranded DNA. Acts on double-stranded DNA containing G/I, T/I, A/I and C/I base pairs, but not on single-stranded inosine-containing DNA. Also has minor xanthine DNA glycosylase activity. Lacks any detectable uracil-DNA glycosylase activity. The protein is Hypoxanthine DNA glycosylase of Methanosarcina barkeri (strain Fusaro / DSM 804).